We begin with the raw amino-acid sequence, 354 residues long: MTTAILERLSTLSMSGQQLRRLPKILEEGLPKMPCTVPETDVPQLFREPYIHAGYRPTGHEWRYYFFSLFQKHNEVVNVWTHLLAALAVLLRFWAFVEAGALQWASPHTLPLLLFILSSITYLTCSLLAHLLQSKSELSHYTFYFVDYVGVSVYQYGSALAHFFYSSDQAWYELFWIFFLPAAAFCGWLSCAGCCYAKYRYRRPYPVMRKICQVVPAGLAFVLDISPVAHRVALCHLAGCQEQAAWYHTLQILFFLVSAYFFSCPVPEKYFPGSCDIVGHGHQIFHAFLSVCTLSQLEAILLDYQGRHEIFLQRHGPLSVYSACLSFFVLAACSAATATLLRHKVKDRLIKKDS.

Residues 1–76 (MTTAILERLS…FSLFQKHNEV (76 aa)) lie on the Cytoplasmic side of the membrane. The chain crosses the membrane as a helical span at residues 77–97 (VNVWTHLLAALAVLLRFWAFV). Over 98 to 111 (EAGALQWASPHTLP) the chain is Extracellular. Residues 112 to 132 (LLLFILSSITYLTCSLLAHLL) form a helical membrane-spanning segment. Topologically, residues 133–173 (QSKSELSHYTFYFVDYVGVSVYQYGSALAHFFYSSDQAWYE) are cytoplasmic. The helical transmembrane segment at 174–194 (LFWIFFLPAAAFCGWLSCAGC) threads the bilayer. Topologically, residues 195 to 213 (CYAKYRYRRPYPVMRKICQ) are extracellular. A helical membrane pass occupies residues 214–234 (VVPAGLAFVLDISPVAHRVAL). Topologically, residues 235–243 (CHLAGCQEQ) are cytoplasmic. A helical transmembrane segment spans residues 244-264 (AAWYHTLQILFFLVSAYFFSC). Topologically, residues 265 to 283 (PVPEKYFPGSCDIVGHGHQ) are extracellular. Residues 284 to 304 (IFHAFLSVCTLSQLEAILLDY) form a helical membrane-spanning segment. The Cytoplasmic portion of the chain corresponds to 305 to 315 (QGRHEIFLQRH). The chain crosses the membrane as a helical span at residues 316-336 (GPLSVYSACLSFFVLAACSAA). Topologically, residues 337–354 (TATLLRHKVKDRLIKKDS) are extracellular.

This sequence belongs to the ADIPOR family. In terms of tissue distribution, expressed in brain and testis.

The protein resides in the cell membrane. Functionally, plasma membrane progesterone (P4) receptor coupled to G proteins. Seems to act through a G(i) mediated pathway. May be involved in oocyte maturation. Also binds dehydroepiandrosterone (DHEA), pregnanolone, pregnenolone and allopregnanolone. This chain is Membrane progestin receptor beta, found in Mus musculus (Mouse).